Here is a 359-residue protein sequence, read N- to C-terminus: Probable dual-specificity RNA methyltransferase RlmN (359 aa).

Glutamate 91 serves as the catalytic Proton acceptor. In terms of domain architecture, Radical SAM core spans 97–329 (QHYGHSVCVT…KKNGVNCVVR (233 aa)). The cysteines at positions 104 and 340 are disulfide-linked. [4Fe-4S] cluster contacts are provided by cysteine 111, cysteine 115, and cysteine 118. S-adenosyl-L-methionine is bound by residues 163 to 164 (GE), serine 195, 218 to 220 (SLH), and asparagine 296. Residue cysteine 340 is the S-methylcysteine intermediate of the active site.

This sequence belongs to the radical SAM superfamily. RlmN family. [4Fe-4S] cluster is required as a cofactor.

The protein resides in the cytoplasm. The enzyme catalyses adenosine(2503) in 23S rRNA + 2 reduced [2Fe-2S]-[ferredoxin] + 2 S-adenosyl-L-methionine = 2-methyladenosine(2503) in 23S rRNA + 5'-deoxyadenosine + L-methionine + 2 oxidized [2Fe-2S]-[ferredoxin] + S-adenosyl-L-homocysteine. The catalysed reaction is adenosine(37) in tRNA + 2 reduced [2Fe-2S]-[ferredoxin] + 2 S-adenosyl-L-methionine = 2-methyladenosine(37) in tRNA + 5'-deoxyadenosine + L-methionine + 2 oxidized [2Fe-2S]-[ferredoxin] + S-adenosyl-L-homocysteine. Functionally, specifically methylates position 2 of adenine 2503 in 23S rRNA and position 2 of adenine 37 in tRNAs. This Streptococcus pyogenes serotype M2 (strain MGAS10270) protein is Probable dual-specificity RNA methyltransferase RlmN.